Here is a 225-residue protein sequence, read N- to C-terminus: MAEGETESPRPKKCGPYISSVTSQSVNVVIRGVVLFFIGVFLALVLNLLQIQRNVTLFPPDVITSIFSSAWWVPPCCGTASAVIGLLYPCIDRHLGEPHKFKREWSSVMRCVAVFVGINHASAKVDFDNNFQFSLTLAALSVGLWWTFDRSRSGFGLGVGIAFLATVVTQLLVYNGVYQYTSPDFLYVRSWLPCIFFAGGITMGNIGRQLAMYECKVIAEKSHQE.

Over 1 to 28 (MAEGETESPRPKKCGPYISSVTSQSVNV) the chain is Cytoplasmic. The helical transmembrane segment at 29–51 (VIRGVVLFFIGVFLALVLNLLQI) threads the bilayer. Residues 52–70 (QRNVTLFPPDVITSIFSSA) lie on the Lumenal side of the membrane. The chain crosses the membrane as a helical span at residues 71–88 (WWVPPCCGTASAVIGLLY). The Cytoplasmic segment spans residues 89–103 (PCIDRHLGEPHKFKR). The chain crosses the membrane as a helical span at residues 104–126 (EWSSVMRCVAVFVGINHASAKVD). At 127 to 129 (FDN) the chain is on the lumenal side. A helical transmembrane segment spans residues 130 to 148 (NFQFSLTLAALSVGLWWTF). The Cytoplasmic segment spans residues 149–153 (DRSRS). S151 carries the post-translational modification Phosphoserine. A helical membrane pass occupies residues 154 to 175 (GFGLGVGIAFLATVVTQLLVYN). Residues 176-189 (GVYQYTSPDFLYVR) lie on the Lumenal side of the membrane. Residues 190-207 (SWLPCIFFAGGITMGNIG) traverse the membrane as a helical segment. Topologically, residues 208-225 (RQLAMYECKVIAEKSHQE) are cytoplasmic. Position 215 is a cysteine sulfenic acid (-SOH); alternate (C215). C215 is covalently cross-linked (Glycyl cysteine thioester (Cys-Gly) (interchain with G-Cter in ubiquitin); alternate). The KxHxx signature appears at 219-225 (AEKSHQE).

It belongs to the INSIG family. As to quaternary structure, interacts with SCAP; interaction is direct and only takes place in the presence of sterols; it prevents interaction between SCAP and the coat protein complex II (COPII). Associates with the SCAP-SREBP complex (composed of SCAP and SREBF1/SREBP1 or SREBF2/SREBP2); association is mediated via its interaction with SCAP and only takes place in the presence of sterols. Interacts with RNF139. Interacts with RNF145. Phosphorylation at Ser-151 by PCK1 reduces binding to oxysterol, disrupting the interaction between INSIG2 and SCAP, thereby promoting nuclear translocation of SREBP proteins (SREBF1/SREBP1 or SREBF2/SREBP2) and subsequent transcription of downstream lipogenesis-related genes. In terms of processing, polyubiquitinated by AMFR/gp78 at Cys-215 in some tissues such as adipose tissues, undifferentiated myoblasts and liver, leading to its degradation. In differentiated myotubes, Cys-215 oxidation prevents ubiquitination at the same site, resulting in protein stabilization. Post-translationally, oxidized at Cys-215 in differentiated myotubes, preventing ubiquitination at the same site, and resulting in protein stabilization. As to expression, expressed in liver, testis, kidney, spleen, intestine, brain and adrenal gland.

It localises to the endoplasmic reticulum membrane. Functionally, oxysterol-binding protein that mediates feedback control of cholesterol synthesis by controlling both endoplasmic reticulum to Golgi transport of SCAP and degradation of HMGCR. Acts as a negative regulator of cholesterol biosynthesis by mediating the retention of the SCAP-SREBP complex in the endoplasmic reticulum, thereby blocking the processing of sterol regulatory element-binding proteins (SREBPs) SREBF1/SREBP1 and SREBF2/SREBP2. Binds oxysterol, including 22-hydroxycholesterol, 24-hydroxycholesterol, 25-hydroxycholesterol and 27-hydroxycholesterol, regulating interaction with SCAP and retention of the SCAP-SREBP complex in the endoplasmic reticulum. In presence of oxysterol, interacts with SCAP, retaining the SCAP-SREBP complex in the endoplasmic reticulum, thereby preventing SCAP from escorting SREBF1/SREBP1 and SREBF2/SREBP2 to the Golgi. Sterol deprivation or phosphorylation by PCK1 reduce oxysterol-binding, disrupting the interaction between INSIG2 and SCAP, thereby promoting Golgi transport of the SCAP-SREBP complex, followed by processing and nuclear translocation of SREBF1/SREBP1 and SREBF2/SREBP2. Also regulates cholesterol synthesis by regulating degradation of HMGCR: initiates the sterol-mediated ubiquitin-mediated endoplasmic reticulum-associated degradation (ERAD) of HMGCR via recruitment of the reductase to the ubiquitin ligase RNF139. The polypeptide is Insulin-induced gene 2 protein (Mus musculus (Mouse)).